Reading from the N-terminus, the 478-residue chain is Cytochrome c lysine N-methyltransferase 1 (478 aa).

Positions 32–284 (PCVSIERSQI…DRFEVFISYC (253 aa)) constitute an SET domain. The tract at residues 199 to 299 (TRAVVLRVYA…VHFKHTYGFF (101 aa)) is SET-like.

It belongs to the class V-like SAM-binding methyltransferase superfamily.

The protein localises to the cytoplasm. Its subcellular location is the cytosol. It catalyses the reaction L-lysyl-[cytochrome c] + S-adenosyl-L-methionine = N(6)-methyl-L-lysyl-[cytochrome c] + S-adenosyl-L-homocysteine + H(+). Functionally, methyltransferase which mediates trimethylation of cytochrome c (CYC1). In Eremothecium gossypii (strain ATCC 10895 / CBS 109.51 / FGSC 9923 / NRRL Y-1056) (Yeast), this protein is Cytochrome c lysine N-methyltransferase 1 (CTM1).